Reading from the N-terminus, the 199-residue chain is DNA dC-&gt;dU-editing enzyme APOBEC-3A (199 aa).

Positions 27 to 143 (GRHKTYLCYE…PLYKEALQML (117 aa)) constitute a CMP/dCMP-type deaminase domain. H70 is a Zn(2+) binding site. The active-site Proton donor is the E72. 2 residues coordinate Zn(2+): C101 and C106.

This sequence belongs to the cytidine and deoxycytidylate deaminase family. As to quaternary structure, interacts with AGO2. Interacts with TRIB3 (via N-terminus). It depends on Zn(2+) as a cofactor. Expressed in peripheral leukocytes with higher expression in CD14-positive phagocytic cells. Highly expressed in keratinocytes and in periphery blood monocytes. Also detected in non-lymphoid tissues including lung and adipose tissues. Found at high levels in colorectal adenocarcinoma, Burkitt's lymphoma and chronic myelogenous leukemia.

The protein resides in the nucleus. Its subcellular location is the cytoplasm. It catalyses the reaction a 2'-deoxycytidine in single-stranded DNA + H2O + H(+) = a 2'-deoxyuridine in single-stranded DNA + NH4(+). DNA deaminase (cytidine deaminase) with restriction activity against viruses, foreign DNA and mobility of retrotransposons. Exhibits antiviral activity against adeno-associated virus (AAV) and human T-cell leukemia virus type 1 (HTLV-1) and may inhibit the mobility of LTR and non-LTR retrotransposons. Selectively targets single-stranded DNA and can deaminate both methylcytosine and cytosine in foreign DNA. Can induce somatic hypermutation in the nuclear and mitochondrial DNA. May also play a role in the epigenetic regulation of gene expression through the process of active DNA demethylation. The sequence is that of DNA dC-&gt;dU-editing enzyme APOBEC-3A (APOBEC3A) from Homo sapiens (Human).